Consider the following 280-residue polypeptide: Large ribosomal subunit protein uL2 (280 aa).

Disordered regions lie at residues 27-58 (STPE…GGGH) and 226-280 (MNPV…KHGR). Composition is skewed to basic residues over residues 37–58 (LHGH…GGGH) and 268–280 (IVRR…KHGR).

Belongs to the universal ribosomal protein uL2 family. In terms of assembly, part of the 50S ribosomal subunit. Forms a bridge to the 30S subunit in the 70S ribosome.

Functionally, one of the primary rRNA binding proteins. Required for association of the 30S and 50S subunits to form the 70S ribosome, for tRNA binding and peptide bond formation. It has been suggested to have peptidyltransferase activity; this is somewhat controversial. Makes several contacts with the 16S rRNA in the 70S ribosome. In Mycobacterium marinum (strain ATCC BAA-535 / M), this protein is Large ribosomal subunit protein uL2.